We begin with the raw amino-acid sequence, 363 residues long: Dual-specificity RNA methyltransferase RlmN (363 aa).

Residue Glu102 is the Proton acceptor of the active site. Positions 108–344 (EKKRSTLCVS…TTTIRKNRGE (237 aa)) constitute a Radical SAM core domain. Cysteines 115 and 350 form a disulfide. 3 residues coordinate [4Fe-4S] cluster: Cys122, Cys126, and Cys129. S-adenosyl-L-methionine is bound by residues 174–175 (GE), Ser206, 228–230 (SLH), and Asn307. The active-site S-methylcysteine intermediate is the Cys350.

It belongs to the radical SAM superfamily. RlmN family. [4Fe-4S] cluster is required as a cofactor.

The protein localises to the cytoplasm. The enzyme catalyses adenosine(2503) in 23S rRNA + 2 reduced [2Fe-2S]-[ferredoxin] + 2 S-adenosyl-L-methionine = 2-methyladenosine(2503) in 23S rRNA + 5'-deoxyadenosine + L-methionine + 2 oxidized [2Fe-2S]-[ferredoxin] + S-adenosyl-L-homocysteine. The catalysed reaction is adenosine(37) in tRNA + 2 reduced [2Fe-2S]-[ferredoxin] + 2 S-adenosyl-L-methionine = 2-methyladenosine(37) in tRNA + 5'-deoxyadenosine + L-methionine + 2 oxidized [2Fe-2S]-[ferredoxin] + S-adenosyl-L-homocysteine. In terms of biological role, specifically methylates position 2 of adenine 2503 in 23S rRNA and position 2 of adenine 37 in tRNAs. m2A2503 modification seems to play a crucial role in the proofreading step occurring at the peptidyl transferase center and thus would serve to optimize ribosomal fidelity. This is Dual-specificity RNA methyltransferase RlmN from Buchnera aphidicola subsp. Acyrthosiphon pisum (strain APS) (Acyrthosiphon pisum symbiotic bacterium).